A 129-amino-acid polypeptide reads, in one-letter code: Glycine cleavage system H protein (129 aa).

Positions 23–105 (SAVVGITEHA…YGEGWLAKFS (83 aa)) constitute a Lipoyl-binding domain. Lys64 is subject to N6-lipoyllysine.

This sequence belongs to the GcvH family. As to quaternary structure, the glycine cleavage system is composed of four proteins: P, T, L and H. (R)-lipoate is required as a cofactor.

The glycine cleavage system catalyzes the degradation of glycine. The H protein shuttles the methylamine group of glycine from the P protein to the T protein. The sequence is that of Glycine cleavage system H protein from Herpetosiphon aurantiacus (strain ATCC 23779 / DSM 785 / 114-95).